The chain runs to 201 residues: MSRREGSLEDPQTDSSVSLLPHLEAKIRQTHSLAHLLTKYAEQLLQEYVQLQGDPFGLPSFSPPRLPVAGLSAPAPSHAGLPVHERLRLDAAALAALPPLLDAVCRRQAELNPRAPRLLRRLEDAARQARALGAAVEALLAALGAANRGPRAEPPAATASAASATGVFPAKVLGLRVCGLYREWLSRTEGDLGQLLPGGSA.

This sequence belongs to the IL-6 superfamily. Highly expressed in heart, skeletal muscle, prostate and ovary. Lower levels in lung, kidney, pancreas, thymus, testis and small intestine. Little or no expression in brain, placenta, liver, spleen, colon or peripheral blood leukocytes.

It is found in the secreted. Its function is as follows. Induces cardiac myocyte hypertrophy in vitro. Binds to and activates the ILST/gp130 receptor. This Homo sapiens (Human) protein is Cardiotrophin-1 (CTF1).